Reading from the N-terminus, the 343-residue chain is Glucokinase (343 aa).

18 to 23 (GDIGGT) is an ATP binding site.

The protein belongs to the bacterial glucokinase family.

It localises to the cytoplasm. The enzyme catalyses D-glucose + ATP = D-glucose 6-phosphate + ADP + H(+). The polypeptide is Glucokinase (Brucella abortus (strain 2308)).